The sequence spans 243 residues: Juxtaposed with another zinc finger protein 1 (243 aa).

The segment at 12-37 adopts a C2H2-type 1 zinc-finger fold; that stretch reads NTCRFGGCGLHFPTLADLIEHIEDNH. A required for interaction with NR2C2 region spans residues 39 to 79; sequence DTDPRVLEKQELQQPTYVALSYINRFMTDAARREQESLKKK. Residues 89–108 show a composition bias toward polar residues; the sequence is SSSVSRGNVSTPPRHSSGSL. Positions 89 to 151 are disordered; the sequence is SSSVSRGNVS…SDSDESWTTE (63 aa). A phosphothreonine mark is found at Thr-109 and Thr-113. A compositionally biased stretch (low complexity) spans 118–130; the sequence is PSSSFRSSTPTGS. Residues 131-148 are compositionally biased toward acidic residues; sequence EYDEEEVDYEESDSDESW. The segment at 173–198 adopts a C2H2-type 2 zinc-finger fold; the sequence is FACPVPGCKKRYKNVNGIKYHAKNGH. A C2H2-type 3; degenerate zinc finger spans residues 208–230; it reads FKCRCGKSYKTAQGLRHHTINFH.

As to quaternary structure, interacts with NR2C2 (via ligand-binding region). In terms of tissue distribution, highest expression in testis with moderate levels in colon, placenta, prostate and ovary and low levels in brain, spleen, liver and small intestine.

The protein localises to the nucleus. In terms of biological role, acts as a transcriptional corepressor of orphan nuclear receptor NR2C2. Inhibits expression of the gluconeogenesis enzyme PCK2 through inhibition of NR2C2 activity. Also involved in transcriptional activation of NAMPT by promoting expression of PPARA and PPARD. Plays a role in lipid metabolism by suppressing lipogenesis, increasing lipolysis and decreasing lipid accumulation in adipose tissue. Plays a role in glucose homeostasis by improving glucose metabolism and insulin sensitivity. This Homo sapiens (Human) protein is Juxtaposed with another zinc finger protein 1.